Reading from the N-terminus, the 429-residue chain is Enolase (429 aa).

Gln-163 is a (2R)-2-phosphoglycerate binding site. The active-site Proton donor is Glu-205. 3 residues coordinate Mg(2+): Asp-242, Glu-287, and Asp-314. (2R)-2-phosphoglycerate contacts are provided by Lys-339, Arg-368, Ser-369, and Lys-390. Lys-339 acts as the Proton acceptor in catalysis.

The protein belongs to the enolase family. Requires Mg(2+) as cofactor.

The protein resides in the cytoplasm. Its subcellular location is the secreted. The protein localises to the cell surface. It catalyses the reaction (2R)-2-phosphoglycerate = phosphoenolpyruvate + H2O. It functions in the pathway carbohydrate degradation; glycolysis; pyruvate from D-glyceraldehyde 3-phosphate: step 4/5. Catalyzes the reversible conversion of 2-phosphoglycerate (2-PG) into phosphoenolpyruvate (PEP). It is essential for the degradation of carbohydrates via glycolysis. In Anaeromyxobacter sp. (strain Fw109-5), this protein is Enolase.